The following is a 183-amino-acid chain: Dual-action ribosomal maturation protein DarP (183 aa).

It belongs to the DarP family.

The protein resides in the cytoplasm. In terms of biological role, member of a network of 50S ribosomal subunit biogenesis factors which assembles along the 30S-50S interface, preventing incorrect 23S rRNA structures from forming. Promotes peptidyl transferase center (PTC) maturation. The protein is Dual-action ribosomal maturation protein DarP of Klebsiella pneumoniae (strain 342).